A 266-amino-acid polypeptide reads, in one-letter code: GTP-binding protein Rhes (266 aa).

GTP is bound at residue 26–33; that stretch reads GASRVGKS. The Effector region motif lies at 48–56; that stretch reads YTPTIEDFH. GTP-binding positions include 73–77 and 140–143; these read DTSGN and NKND. The tract at residues 189–235 is interaction with GNB1, GNB2 and GNB3; the sequence is MAKLPHEMSPALHHKISVQYGDAFHPRPFCMRRTKVAGAYGMVSPFA. Cys-263 is modified (cysteine methyl ester). Cys-263 carries S-farnesyl cysteine lipidation. A propeptide spans 264–266 (removed in mature form); sequence SIQ.

The protein belongs to the small GTPase superfamily. RasD family. In terms of assembly, monomer (Potential). Interacts with PIK3CA and UBE2I. Interacts with GNB1, GNB2 and GNB3. Farnesylated. Farnesylation is required for membrane targeting. In terms of tissue distribution, highly expressed in brain; prominently in the striatum and weakly in kidney, thyroid, lung, heart and testis. Not expressed in liver. Expressed in pancreatic cell lines and in a embryonic stem cell line.

It is found in the cell membrane. Functionally, GTPase signaling protein that binds to and hydrolyzes GTP. Regulates signaling pathways involving G-proteins-coupled receptor and heterotrimeric proteins such as GNB1, GNB2 and GNB3. May be involved in selected striatal competencies, mainly locomotor activity and motor coordination. In Mus musculus (Mouse), this protein is GTP-binding protein Rhes (Rasd2).